The chain runs to 382 residues: 3-phytase (382 aa).

Positions 1–26 (MKVPKTMLLSTAAGLLLSLTATSVSA) are cleaved as a signal peptide. Positions 27 to 361 (HYVNEEHHFK…VSWEQIAQHL (335 aa)) constitute a BPP domain.

Its subcellular location is the secreted. The catalysed reaction is 1D-myo-inositol hexakisphosphate + H2O = 1D-myo-inositol 1,2,4,5,6-pentakisphosphate + phosphate. This chain is 3-phytase (phy), found in Bacillus subtilis (strain 168).